A 185-amino-acid polypeptide reads, in one-letter code: Ribosome-recycling factor (185 aa).

Belongs to the RRF family.

It is found in the cytoplasm. Its function is as follows. Responsible for the release of ribosomes from messenger RNA at the termination of protein biosynthesis. May increase the efficiency of translation by recycling ribosomes from one round of translation to another. In Geobacillus kaustophilus (strain HTA426), this protein is Ribosome-recycling factor.